Reading from the N-terminus, the 774-residue chain is Transcription factor MBS1 (774 aa).

An HTH APSES-type domain is found at 37 to 143 (EITFYDSGVP…YVPTSVSPPP (107 aa)). Positions 68–89 (ATQILKVAGFDKPQRTRVLERE) form a DNA-binding region, H-T-H motif. Disordered stretches follow at residues 135-180 (VPTS…SAAA) and 209-229 (RVSL…VASV). Basic and acidic residues predominate over residues 155–165 (ARRDKEKETGR). Residues 166–176 (TKATPSRTGPT) are compositionally biased toward polar residues. ANK repeat units follow at residues 348-377 (DGHT…SIFA) and 467-496 (EGET…NPKI). The segment at 752 to 774 (EEENDNQVYNTSAGESGPSSWVQ) is disordered. Residues 757–774 (NQVYNTSAGESGPSSWVQ) show a composition bias toward polar residues.

The protein localises to the nucleus. Transcription factor that positively regulates ergosterol biosynthesis and thereby affects polyene and azole drug susceptibility. Plays a role in maintenance of membrane stability and osmotic stress response. Involved in genotoxic and oxidative stress responses. Also promotes production of melanin and capsule and thereby is required for full virulence. The polypeptide is Transcription factor MBS1 (Cryptococcus neoformans var. grubii serotype A (strain H99 / ATCC 208821 / CBS 10515 / FGSC 9487) (Filobasidiella neoformans var. grubii)).